A 432-amino-acid chain; its full sequence is Adenylosuccinate synthetase (432 aa).

GTP contacts are provided by residues 13 to 19 and 41 to 43; these read GDEGKGK and GHT. Catalysis depends on D14, which acts as the Proton acceptor. Mg(2+) contacts are provided by D14 and G41. IMP contacts are provided by residues 14–17, 39–42, T130, R144, Q225, T240, and R304; these read DEGK and NAGH. The Proton donor role is filled by H42. Residue 300–306 participates in substrate binding; the sequence is ATTGRRR. Residues R306, 332–334, and 415–417 each bind GTP; these read KLD and STG.

Belongs to the adenylosuccinate synthetase family. As to quaternary structure, homodimer. Requires Mg(2+) as cofactor.

It localises to the cytoplasm. The catalysed reaction is IMP + L-aspartate + GTP = N(6)-(1,2-dicarboxyethyl)-AMP + GDP + phosphate + 2 H(+). Its pathway is purine metabolism; AMP biosynthesis via de novo pathway; AMP from IMP: step 1/2. In terms of biological role, plays an important role in the de novo pathway of purine nucleotide biosynthesis. Catalyzes the first committed step in the biosynthesis of AMP from IMP. The sequence is that of Adenylosuccinate synthetase from Pectobacterium carotovorum subsp. carotovorum (strain PC1).